A 507-amino-acid chain; its full sequence is Maturase K (507 aa).

This sequence belongs to the intron maturase 2 family. MatK subfamily.

It localises to the plastid. Its subcellular location is the chloroplast. Usually encoded in the trnK tRNA gene intron. Probably assists in splicing its own and other chloroplast group II introns. In Liriodendron chinense (Chinese tulip tree), this protein is Maturase K.